A 169-amino-acid chain; its full sequence is Benzoate 1,2-dioxygenase subunit beta (169 aa).

It belongs to the bacterial ring-hydroxylating dioxygenase beta subunit family. In terms of assembly, this dioxygenase system consists of three proteins: the two subunits of the hydroxylase (BenA and BenB), and an electron transfer component (BenC).

It carries out the reaction benzoate + NADH + O2 + H(+) = (1R,6S)-1,6-dihydroxycyclohexa-2,4-diene-1-carboxylate + NAD(+). It participates in aromatic compound metabolism; benzoate degradation via hydroxylation; catechol from benzoate: step 1/2. Functionally, degradation of benzoate to 2-hydro-1,2-dihydroxybenzoate (DHB). The beta subunit may be responsible for the substrate specificity of the enzyme. The sequence is that of Benzoate 1,2-dioxygenase subunit beta (benB) from Acinetobacter baylyi (strain ATCC 33305 / BD413 / ADP1).